A 503-amino-acid chain; its full sequence is ATP synthase subunit alpha (503 aa).

170–177 is an ATP binding site; sequence GDRQTGKT.

This sequence belongs to the ATPase alpha/beta chains family. F-type ATPases have 2 components, CF(1) - the catalytic core - and CF(0) - the membrane proton channel. CF(1) has five subunits: alpha(3), beta(3), gamma(1), delta(1), epsilon(1). CF(0) has three main subunits: a(1), b(2) and c(9-12). The alpha and beta chains form an alternating ring which encloses part of the gamma chain. CF(1) is attached to CF(0) by a central stalk formed by the gamma and epsilon chains, while a peripheral stalk is formed by the delta and b chains.

Its subcellular location is the cell inner membrane. It carries out the reaction ATP + H2O + 4 H(+)(in) = ADP + phosphate + 5 H(+)(out). Functionally, produces ATP from ADP in the presence of a proton gradient across the membrane. The alpha chain is a regulatory subunit. In Geobacter metallireducens (strain ATCC 53774 / DSM 7210 / GS-15), this protein is ATP synthase subunit alpha.